The sequence spans 179 residues: NADH-quinone oxidoreductase subunit B 1 (179 aa).

[4Fe-4S] cluster contacts are provided by C38, C39, C104, and C133.

This sequence belongs to the complex I 20 kDa subunit family. As to quaternary structure, NDH-1 is composed of 14 different subunits. Subunits NuoB, C, D, E, F, and G constitute the peripheral sector of the complex. Requires [4Fe-4S] cluster as cofactor.

Its subcellular location is the cell membrane. It carries out the reaction a quinone + NADH + 5 H(+)(in) = a quinol + NAD(+) + 4 H(+)(out). Functionally, NDH-1 shuttles electrons from NADH, via FMN and iron-sulfur (Fe-S) centers, to quinones in the respiratory chain. The immediate electron acceptor for the enzyme in this species is believed to be ubiquinone. Couples the redox reaction to proton translocation (for every two electrons transferred, four hydrogen ions are translocated across the cytoplasmic membrane), and thus conserves the redox energy in a proton gradient. This chain is NADH-quinone oxidoreductase subunit B 1, found in Herpetosiphon aurantiacus (strain ATCC 23779 / DSM 785 / 114-95).